The sequence spans 360 residues: Hydroxycarboxylic acid receptor 2 (360 aa).

Topologically, residues 1–30 are extracellular; that stretch reads MSKQNHFLVINGKNCCVFRDENIAKVLPPV. A helical membrane pass occupies residues 31-51; it reads LGLEFVFGLLGNGLALWIFCF. Residues 52 to 60 lie on the Cytoplasmic side of the membrane; it reads HLKSWKSSR. A helical transmembrane segment spans residues 61-81; it reads IFLFNLAVADFLLIICLPFLT. Topologically, residues 82 to 98 are extracellular; that stretch reads DNYVQNWDWRFGSIPCR. A disulfide bond links cysteine 97 and cysteine 174. Residues 99–119 traverse the membrane as a helical segment; it reads VMLFMLAMNRQGSIIFLTVVA. At 120–140 the chain is on the cytoplasmic side; that stretch reads VDRYFRVVHPHHFLNKISNRT. Residues 141 to 161 traverse the membrane as a helical segment; the sequence is AAIISCFLWGITIGLTVHLLY. Residues 162 to 189 are Extracellular-facing; that stretch reads TDMMTRNGDANLCSSFSICYTFRWHDAM. The helical transmembrane segment at 190-210 threads the bilayer; that stretch reads FLLEFFLPLGIILFCSGRIIW. Residues 211–226 lie on the Cytoplasmic side of the membrane; that stretch reads SLRQRQMDRHVKIKRA. Residues 227 to 247 traverse the membrane as a helical segment; it reads INFIMVVAIVFVICFLPSVAV. Residues 248–270 lie on the Extracellular side of the membrane; that stretch reads RIRIFWLLYKHNVRNCDIYSSVD. Residues 271 to 291 traverse the membrane as a helical segment; that stretch reads LAFFTTLSFTYMNSMLDPVVY. The Cytoplasmic portion of the chain corresponds to 292 to 360; that stretch reads YFSSPSFPNF…SPPYLASTSR (69 aa). A disordered region spans residues 320-360; the sequence is NNRSTSVELTGDPSTIRSIPGALMTDPSEPGSPPYLASTSR. The span at 321 to 336 shows a compositional bias: polar residues; that stretch reads NRSTSVELTGDPSTIR. At serine 325 the chain carries Phosphoserine.

This sequence belongs to the G-protein coupled receptor 1 family. As to expression, expressed in adipose tissue, lung and spleen.

The protein resides in the cell membrane. Its function is as follows. Acts as a high affinity receptor for both nicotinic acid (also known as niacin) and (D)-beta-hydroxybutyrate and mediates increased adiponectin secretion and decreased lipolysis through G(i)-protein-mediated inhibition of adenylyl cyclase. This pharmacological effect requires nicotinic acid doses that are much higher than those provided by a normal diet. Mediates nicotinic acid-induced apoptosis in mature neutrophils. Receptor activation by nicotinic acid results in reduced cAMP levels which may affect activity of cAMP-dependent protein kinase A and phosphorylation of target proteins, leading to neutrophil apoptosis. The rank order of potency for the displacement of nicotinic acid binding is 5-methyl pyrazole-3-carboxylic acid = pyridine-3-acetic acid &gt; acifran &gt; 5-methyl nicotinic acid = acipimox &gt;&gt; nicotinuric acid = nicotinamide. This chain is Hydroxycarboxylic acid receptor 2 (Hcar2), found in Rattus norvegicus (Rat).